The primary structure comprises 305 residues: Small ribosomal subunit protein bS1B (305 aa).

S1 motif domains lie at 29–98, 116–180, and 194–262; these read GQTV…LSRR, GKTL…LTQR, and GNIY…LSTR.

The protein belongs to the bacterial ribosomal protein bS1 family.

Functionally, binds mRNA. In Synechocystis sp. (strain ATCC 27184 / PCC 6803 / Kazusa), this protein is Small ribosomal subunit protein bS1B (rps1b).